A 502-amino-acid chain; its full sequence is Lysine--tRNA ligase (502 aa).

Glu399 and Glu406 together coordinate Mg(2+).

The protein belongs to the class-II aminoacyl-tRNA synthetase family. As to quaternary structure, homodimer. The cofactor is Mg(2+).

The protein resides in the cytoplasm. It catalyses the reaction tRNA(Lys) + L-lysine + ATP = L-lysyl-tRNA(Lys) + AMP + diphosphate. In Synechococcus sp. (strain RCC307), this protein is Lysine--tRNA ligase.